The following is a 140-amino-acid chain: uncharacterized protein (140 aa).

Positions 27-65 (LLGEVSELELQKICFNRSLRNEINQLEEQNDISFVRVER) form a coiled coil.

This is an uncharacterized protein from Pasteurella multocida (strain Pm70).